The primary structure comprises 288 residues: Scolexin B (288 aa).

Positions 1–20 (MFASKLAVCSALALLAVAHA) are cleaved as a signal peptide. Residues 21-287 (APGGNDIQKI…VRDWIKKVTN (267 aa)) form the Peptidase S1 domain. The interval 27-56 (IQKITKAPNVPTKAEGDAASKASAPAIPPK) is disordered. Cys72 and Cys88 are joined by a disulfide. Residues His87 and Asp145 each act as charge relay system in the active site. Cystine bridges form between Cys210/Cys223 and Cys235/Cys264. Catalysis depends on Ser239, which acts as the Charge relay system.

This sequence belongs to the peptidase S1 family.

The protein is Scolexin B of Heliothis virescens (Tobacco budworm moth).